Here is a 1058-residue protein sequence, read N- to C-terminus: Ubiquitin-like modifier-activating enzyme 1 (1058 aa).

Residues 1–47 form a disordered region; sequence MSSSPLSKKRRVSGPDPKPGSNCSPAQSVLSEVPSVPTNGMAKNGSE. Residue S2 is modified to N-acetylserine. S2 is subject to N-acetylalanine. S4 carries the phosphoserine modification. The Nuclear localization signal signature appears at 5-11; that stretch reads PLSKKRR. Phosphoserine is present on residues S13, S21, S24, and S46. Over residues 21–30 the composition is skewed to polar residues; the sequence is SNCSPAQSVL. Y55 carries the phosphotyrosine modification. 2 tandem repeats follow at residues 63-199 and 459-611. The 2 approximate repeats stretch occupies residues 63–611; the sequence is GHEAMKRLQT…GTKGNVQVVI (549 aa). ATP-binding positions include A478, D504, R515, K528, and 576–577; that span reads DN. K528 is modified (N6-succinyllysine). C632 acts as the Glycyl thioester intermediate in catalysis. Residue K671 is modified to N6-acetyllysine. Residue T800 is modified to Phosphothreonine. Phosphoserine occurs at positions 810, 816, 820, and 835. At K980 the chain carries N6-acetyllysine.

Belongs to the ubiquitin-activating E1 family. Monomer. Interacts with GAN (via BTB domain). Post-translationally, ISGylated. In terms of tissue distribution, detected in erythrocytes (at protein level). Ubiquitous.

It localises to the cytoplasm. The protein localises to the mitochondrion. The protein resides in the nucleus. It carries out the reaction ATP + ubiquitin + [E1 ubiquitin-activating enzyme]-L-cysteine = AMP + diphosphate + S-ubiquitinyl-[E1 ubiquitin-activating enzyme]-L-cysteine.. It participates in protein modification; protein ubiquitination. Functionally, catalyzes the first step in ubiquitin conjugation to mark cellular proteins for degradation through the ubiquitin-proteasome system. Activates ubiquitin by first adenylating its C-terminal glycine residue with ATP, and thereafter linking this residue to the side chain of a cysteine residue in E1, yielding a ubiquitin-E1 thioester and free AMP. Essential for the formation of radiation-induced foci, timely DNA repair and for response to replication stress. Promotes the recruitment of TP53BP1 and BRCA1 at DNA damage sites. In Homo sapiens (Human), this protein is Ubiquitin-like modifier-activating enzyme 1 (UBA1).